The chain runs to 347 residues: GMP reductase (347 aa).

Residue 108 to 131 coordinates NADP(+); that stretch reads ADFQKTKDIMALTDDLIFICIDIA. 2 residues coordinate K(+): G181 and G183. C186 functions as the Thioimidate intermediate in the catalytic mechanism. Position 216-239 (216-239) interacts with NADP(+); the sequence is IIGDGGCSCAGDVSKAFGGGADFV.

Belongs to the IMPDH/GMPR family. GuaC type 1 subfamily. In terms of assembly, homotetramer.

The catalysed reaction is IMP + NH4(+) + NADP(+) = GMP + NADPH + 2 H(+). In terms of biological role, catalyzes the irreversible NADPH-dependent deamination of GMP to IMP. It functions in the conversion of nucleobase, nucleoside and nucleotide derivatives of G to A nucleotides, and in maintaining the intracellular balance of A and G nucleotides. The chain is GMP reductase from Aliivibrio fischeri (strain ATCC 700601 / ES114) (Vibrio fischeri).